We begin with the raw amino-acid sequence, 144 residues long: D-aminoacyl-tRNA deacylase (144 aa).

Residues 136-137 carry the Gly-cisPro motif, important for rejection of L-amino acids motif; that stretch reads GP.

The protein belongs to the DTD family. Homodimer.

The protein resides in the cytoplasm. The enzyme catalyses glycyl-tRNA(Ala) + H2O = tRNA(Ala) + glycine + H(+). The catalysed reaction is a D-aminoacyl-tRNA + H2O = a tRNA + a D-alpha-amino acid + H(+). An aminoacyl-tRNA editing enzyme that deacylates mischarged D-aminoacyl-tRNAs. Also deacylates mischarged glycyl-tRNA(Ala), protecting cells against glycine mischarging by AlaRS. Acts via tRNA-based rather than protein-based catalysis; rejects L-amino acids rather than detecting D-amino acids in the active site. By recycling D-aminoacyl-tRNA to D-amino acids and free tRNA molecules, this enzyme counteracts the toxicity associated with the formation of D-aminoacyl-tRNA entities in vivo and helps enforce protein L-homochirality. The chain is D-aminoacyl-tRNA deacylase from Mannheimia succiniciproducens (strain KCTC 0769BP / MBEL55E).